Here is a 227-residue protein sequence, read N- to C-terminus: PKHD-type hydroxylase Bphyt_7102 (227 aa).

Positions 80-179 (QVYPPLFNRY…RIASFFWVQS (100 aa)) constitute a Fe2OG dioxygenase domain. Residues His-98, Asp-100, and His-160 each coordinate Fe cation. Residue Arg-170 coordinates 2-oxoglutarate.

The cofactor is Fe(2+). L-ascorbate is required as a cofactor.

The chain is PKHD-type hydroxylase Bphyt_7102 from Paraburkholderia phytofirmans (strain DSM 17436 / LMG 22146 / PsJN) (Burkholderia phytofirmans).